We begin with the raw amino-acid sequence, 422 residues long: Zinc-regulated transporter 2 (422 aa).

At 1-27 the chain is on the extracellular side; that stretch reads MVDLIARDDSVDTCQASNGYNGHAGLR. The chain crosses the membrane as a helical span at residues 28-48; the sequence is ILAVFIILISSGLGVYFPILS. Residues 49-60 are Cytoplasmic-facing; it reads SRYSFIRLPNWC. A helical transmembrane segment spans residues 61-81; it reads FFIAKFFGSGVIVATAFVHLL. Over 82 to 99 the chain is Extracellular; sequence QPAAEALGDECLGGTFAE. The chain crosses the membrane as a helical span at residues 100–120; it reads YPWAFGICLMSLFLLFFTEII. Topologically, residues 121–262 are cytoplasmic; the sequence is THYFVAKTLG…EEDKEQYLNQ (142 aa). Phosphoserine occurs at positions 148, 149, 162, and 170. Position 188 is a phosphothreonine (Thr-188). Residues 263–283 form a helical membrane-spanning segment; it reads ILAVFILEFGIIFHSVFVGLS. The Extracellular segment spans residues 284–290; that stretch reads LSVAGEE. The chain crosses the membrane as a helical span at residues 291–311; that stretch reads FETLFIVLTFHQMFEGLGLGT. At 312-326 the chain is on the cytoplasmic side; the sequence is RVAETNWPESKKYMP. A helical transmembrane segment spans residues 327 to 347; it reads WLMGLAFTLTSPIAVAVGIGV. At 348–358 the chain is on the extracellular side; the sequence is RHSWIPGSRRA. The chain crosses the membrane as a helical span at residues 359 to 379; the sequence is LIANGVFDSISSGILIYTGLV. Topologically, residues 380–400 are cytoplasmic; sequence ELMAHEFLYSNQFKGPDGLKK. Residues 401–421 traverse the membrane as a helical segment; the sequence is MLSAYLIMCCGAALMALLGKW. Residue Ala-422 is a topological domain, extracellular.

This sequence belongs to the ZIP transporter (TC 2.A.5) family.

It localises to the membrane. Low-affinity zinc transport protein. Active in zinc-replete cells and is time-, temperature- and concentration-dependent and prefers zinc over other metals as its substrate. The sequence is that of Zinc-regulated transporter 2 (ZRT2) from Saccharomyces cerevisiae (strain ATCC 204508 / S288c) (Baker's yeast).